The following is a 101-amino-acid chain: NAD(P)H-quinone oxidoreductase subunit 4L, chloroplastic (101 aa).

3 helical membrane passes run 2 to 22 (ILEH…YGLI), 32 to 52 (MCLE…SDFF), and 61 to 81 (IFCI…LAIV).

The protein belongs to the complex I subunit 4L family. In terms of assembly, NDH is composed of at least 16 different subunits, 5 of which are encoded in the nucleus.

It localises to the plastid. The protein resides in the chloroplast thylakoid membrane. It carries out the reaction a plastoquinone + NADH + (n+1) H(+)(in) = a plastoquinol + NAD(+) + n H(+)(out). The catalysed reaction is a plastoquinone + NADPH + (n+1) H(+)(in) = a plastoquinol + NADP(+) + n H(+)(out). Functionally, NDH shuttles electrons from NAD(P)H:plastoquinone, via FMN and iron-sulfur (Fe-S) centers, to quinones in the photosynthetic chain and possibly in a chloroplast respiratory chain. The immediate electron acceptor for the enzyme in this species is believed to be plastoquinone. Couples the redox reaction to proton translocation, and thus conserves the redox energy in a proton gradient. This Olimarabidopsis pumila (Dwarf rocket) protein is NAD(P)H-quinone oxidoreductase subunit 4L, chloroplastic.